The sequence spans 79 residues: Small ribosomal subunit protein bS18 (79 aa).

The protein belongs to the bacterial ribosomal protein bS18 family. In terms of assembly, part of the 30S ribosomal subunit. Forms a tight heterodimer with protein bS6.

Functionally, binds as a heterodimer with protein bS6 to the central domain of the 16S rRNA, where it helps stabilize the platform of the 30S subunit. The protein is Small ribosomal subunit protein bS18 of Pseudarthrobacter chlorophenolicus (strain ATCC 700700 / DSM 12829 / CIP 107037 / JCM 12360 / KCTC 9906 / NCIMB 13794 / A6) (Arthrobacter chlorophenolicus).